The sequence spans 65 residues: MRTFLFLFAVLFFLTPAKNAFFDEKCNKLKGTCKNNCGKNEELIALCQKSLKCCRTIQPCGSIID.

A signal peptide spans methionine 1–alanine 20. 3 cysteine pairs are disulfide-bonded: cysteine 26-cysteine 53, cysteine 33-cysteine 47, and cysteine 37-cysteine 54.

This sequence belongs to the beta-defensin family. As to quaternary structure, monomer. Interacts with CCR2 (via extracellular N-terminal region); this interaction may preferentially require specific tyrosine sulfation on CCR2.

The protein localises to the secreted. Its subcellular location is the membrane. Has antibacterial activity. Acts as a ligand for C-C chemokine receptor CCR2. This chain is Beta-defensin 106A (DEFB106A), found in Gorilla gorilla gorilla (Western lowland gorilla).